Consider the following 263-residue polypeptide: Probable adenylate kinase 7, mitochondrial (263 aa).

The transit peptide at 1 to 30 directs the protein to the mitochondrion; sequence MAWLSRVRGVSPVTRLAAIRRSFGSAAALE. An ATP-binding site is contributed by 72–77; it reads GAWRHV. Positions 92-121 are NMP; that stretch reads SMGSLVRQELNPRSSLYKEIASAVNERKLV. AMP-binding positions include R98, 119–121, 149–152, Q156, and R206; these read KLV and GIPR. G234 contacts ATP.

Belongs to the adenylate kinase family. In terms of assembly, monomer.

It localises to the mitochondrion. The catalysed reaction is AMP + ATP = 2 ADP. Functionally, catalyzes the reversible transfer of the terminal phosphate group between ATP and AMP. Plays an important role in cellular energy homeostasis and in adenine nucleotide metabolism. The protein is Probable adenylate kinase 7, mitochondrial of Arabidopsis thaliana (Mouse-ear cress).